We begin with the raw amino-acid sequence, 603 residues long: Dual specificity protein phosphatase CDC14A (603 aa).

Positions 7-162 (ELIGACEFMK…GLQHGFFDFE (156 aa)) are a. Residues 163–176 (TFDAEEYEHYERVE) form a linker region. The interval 177-343 (NGDFNWIVPG…QGDIFRSKLK (167 aa)) is b. Residues 179–336 (DFNWIVPGKF…KQASLWVQGD (158 aa)) enclose the Tyrosine-protein phosphatase domain. Cys-278 (phosphocysteine intermediate) is an active-site residue. Phosphoserine is present on Ser-484. Residues 518–538 (NGSTQTPGRNYPELNNNQYTR) show a composition bias toward polar residues. The disordered stretch occupies residues 518–583 (NGSTQTPGRN…RPSFPGSLSS (66 aa)). Low complexity-rich tracts occupy residues 539 to 558 (SSNS…LNSS) and 573 to 583 (LRPSFPGSLSS). Phosphoserine is present on Ser-592.

Belongs to the protein-tyrosine phosphatase family. Non-receptor class CDC14 subfamily. Interacts with KIF20A. Interaction is required to localize CDC14 to the midzone of the mitotic spindle. Expressed in the inner ear.

The protein localises to the nucleus. Its subcellular location is the cytoplasm. It is found in the cytoskeleton. The protein resides in the microtubule organizing center. It localises to the centrosome. The protein localises to the spindle. Its subcellular location is the cell projection. It is found in the kinocilium. The protein resides in the spindle pole. It localises to the stereocilium. It catalyses the reaction O-phospho-L-tyrosyl-[protein] + H2O = L-tyrosyl-[protein] + phosphate. The catalysed reaction is O-phospho-L-seryl-[protein] + H2O = L-seryl-[protein] + phosphate. It carries out the reaction O-phospho-L-threonyl-[protein] + H2O = L-threonyl-[protein] + phosphate. Dual-specificity phosphatase. Required for centrosome separation and productive cytokinesis during cell division. Dephosphorylates SIRT2 around early anaphase. May dephosphorylate the APC subunit FZR1/CDH1, thereby promoting APC-FZR1 dependent degradation of mitotic cyclins and subsequent exit from mitosis. Required for normal hearing. The polypeptide is Dual specificity protein phosphatase CDC14A (Cdc14a) (Mus musculus (Mouse)).